A 217-amino-acid polypeptide reads, in one-letter code: 3-demethoxyubiquinol 3-hydroxylase (217 aa).

Glu66, Glu96, His99, Glu148, Glu180, and His183 together coordinate Fe cation.

This sequence belongs to the COQ7 family. Fe cation serves as cofactor.

Its subcellular location is the cell membrane. It carries out the reaction a 5-methoxy-2-methyl-3-(all-trans-polyprenyl)benzene-1,4-diol + AH2 + O2 = a 3-demethylubiquinol + A + H2O. It participates in cofactor biosynthesis; ubiquinone biosynthesis. Catalyzes the hydroxylation of 2-nonaprenyl-3-methyl-6-methoxy-1,4-benzoquinol during ubiquinone biosynthesis. The protein is 3-demethoxyubiquinol 3-hydroxylase of Ralstonia pickettii (strain 12J).